Consider the following 1170-residue polypeptide: MDADWDEVTRIAYPAPGTNDFPRPATAVAFDPIAELLWAGFDRGRVCSFYGRDLTRYTAFKIQPASEGPVRQFLFHDKGVIVLGTRSVHMAMRRGPALWNIRHENMKDLRCMSFTSKGTQEIIVAGWQDTMLVIDVLKGDIIKQIPAQHHYSIMKKSRYICAATKTGSVDLIDPLSFKIVRSWQAHASYINDMDAQNDFIVTCGGSLKQQAAQTYMLDPYVNVFDLKNMASMKPMPFPPLAAHVRLHPRMLTTAIVTSQHGQMHVVDIMNPNSSTVRYANISSYVKLFEIAPSGEALVIGDADCNIHLWGSPTKIHFTDMAIPIELPEPEEPAPVLDWSIETPLSSIGLPYYREPLFSAWPADIISDVGAPPLQLEPSFVATLKQAEWGLYGKNTRNVRRNQVEDTRNTNKQSNALQAPKFLSERARESALSSGGDSSSDPQVDQEPEDPNEIESLKPEAPPLYRNLEIKYSKFGVDDFDFGYYNKTRYAGLENHIPNSYANSLLQLMHYTPLLRNMALQHAATACVSDLCLLCELGFVFDMLQKAEGATCQATNMFKALSGTPQAAPLGLLEEETHVPSLATMAQNLSRFLLEKIHNEYRTIPPISTALEQSLFNFPHPPTPDELVAKVLATSAVATIKCMNCRSETTRPGTTHVIDLLYPPPKTAGRGGRASKVTFSQVLKMGVERETTSKGWCSRCQRYQNLQMRKTIHSVPAVLVVNAGVSNQEHRKLWSTPGWLPEEIGIIVDQGQFFCFEGEDLKLHLQRGIHNITVYSLIGMVINIESHSPQKSHLVGIINVAHAEATPPGENKWHLFNDFSVRPVSAAEALTFNAAWKMPAVLLFQIKSANNKSNLDWKTNLDTSILYKDTNPNTEKKTYRTLDQERERPGPDTIVALDTEFVSLKQPEIQMNSDGERETIRPMSHALARVSVVRGQGENEGSAFIDDYIAIREPVVDYLTLYSGITASDLDPRTSKHNLVSLKTAYKKLWVLLNLGCKFLGHGLKQDFRVINIQVPRAQVIDTIEVFYLKSRLRKLSLAFLAWYLLKEDIQLETHDSIEDARTALKLYRKYLEFDDAGILEAMLEDIYKAGRATNFKPPRREDREKELQRQSTPPNSTAPNDCGAKPDGNGNENGGEPATPARKTGGITAPTFGAVNVFGTPSKASSPLPK.

WD repeat units lie at residues 104-144 (ENMK…IIKQ) and 280-319 (NISSYVKLFEIAPSGEALVIGDADCNIHLWGSPTKIHFTD). The interval 319–458 (DMAIPIELPE…DPNEIESLKP (140 aa)) is linker. Positions 399–459 (RRNQVEDTRN…PNEIESLKPE (61 aa)) are disordered. Residues 443–452 (VDQEPEDPNE) are compositionally biased toward acidic residues. A USP domain is found at 459–846 (EAPPLYRNLE…MPAVLLFQIK (388 aa)). Residues 894–1067 (VALDTEFVSL…EDARTALKLY (174 aa)) form the Exonuclease domain. A divalent metal cation is bound by residues Asp897, Glu899, Asp1006, and Asp1059. Residues 1094–1170 (NFKPPRREDR…PSKASSPLPK (77 aa)) are disordered. Positions 1098–1108 (PRREDREKELQ) are enriched in basic and acidic residues. The segment covering 1109 to 1119 (RQSTPPNSTAP) has biased composition (polar residues).

The protein belongs to the peptidase C19 family. PAN2 subfamily. Forms a heterotrimer with an asymmetric homodimer of the regulatory subunit PAN3 to form the poly(A)-nuclease (PAN) deadenylation complex. A divalent metal cation is required as a cofactor.

The protein localises to the cytoplasm. It catalyses the reaction Exonucleolytic cleavage of poly(A) to 5'-AMP.. Its activity is regulated as follows. Positively regulated by the regulatory subunit PAN3. Functionally, catalytic subunit of the poly(A)-nuclease (PAN) deadenylation complex, one of two cytoplasmic mRNA deadenylases involved in mRNA turnover. PAN specifically shortens poly(A) tails of RNA and the activity is stimulated by poly(A)-binding protein PAB1. PAN deadenylation is followed by rapid degradation of the shortened mRNA tails by the CCR4-NOT complex. Deadenylated mRNAs are then degraded by two alternative mechanisms, namely exosome-mediated 3'-5' exonucleolytic degradation, or deadenylation-dependent mRNA decaping and subsequent 5'-3' exonucleolytic degradation by XRN1. May also be involved in post-transcriptional maturation of mRNA poly(A) tails. This chain is PAN2-PAN3 deadenylation complex catalytic subunit PAN2, found in Chaetomium thermophilum (strain DSM 1495 / CBS 144.50 / IMI 039719) (Thermochaetoides thermophila).